Here is a 67-residue protein sequence, read N- to C-terminus: UPF0337 protein BCE_3655 (67 aa).

Belongs to the UPF0337 (CsbD) family.

The protein is UPF0337 protein BCE_3655 of Bacillus cereus (strain ATCC 10987 / NRS 248).